Reading from the N-terminus, the 345-residue chain is S-adenosylmethionine:tRNA ribosyltransferase-isomerase (345 aa).

This sequence belongs to the QueA family. Monomer.

Its subcellular location is the cytoplasm. It carries out the reaction 7-aminomethyl-7-carbaguanosine(34) in tRNA + S-adenosyl-L-methionine = epoxyqueuosine(34) in tRNA + adenine + L-methionine + 2 H(+). It participates in tRNA modification; tRNA-queuosine biosynthesis. In terms of biological role, transfers and isomerizes the ribose moiety from AdoMet to the 7-aminomethyl group of 7-deazaguanine (preQ1-tRNA) to give epoxyqueuosine (oQ-tRNA). This is S-adenosylmethionine:tRNA ribosyltransferase-isomerase from Helicobacter pylori (strain P12).